Here is a 349-residue protein sequence, read N- to C-terminus: Ion-translocating oxidoreductase complex subunit D (349 aa).

The next 4 membrane-spanning stretches (helical) occupy residues Ile-20–Gly-40, Gly-42–Leu-62, Val-83–Ala-105, and Ile-120–Thr-140. Thr-184 carries the post-translational modification FMN phosphoryl threonine. 5 helical membrane-spanning segments follow: residues Ile-212–Leu-232, Val-236–Thr-256, Phe-263–Ile-283, Ser-291–Ile-311, and Asp-319–Leu-339.

It belongs to the NqrB/RnfD family. In terms of assembly, the complex is composed of six subunits: RnfA, RnfB, RnfC, RnfD, RnfE and RnfG. It depends on FMN as a cofactor.

The protein resides in the cell inner membrane. In terms of biological role, part of a membrane-bound complex that couples electron transfer with translocation of ions across the membrane. The protein is Ion-translocating oxidoreductase complex subunit D of Buchnera aphidicola subsp. Schizaphis graminum (strain Sg).